The following is a 283-amino-acid chain: Pantothenate synthetase (283 aa).

Residue 26–33 participates in ATP binding; the sequence is MGNLHEGH. The Proton donor role is filled by His33. (R)-pantoate is bound at residue Gln57. A beta-alanine-binding site is contributed by Gln57. ATP is bound at residue 144-147; that stretch reads GKKD. Gln150 serves as a coordination point for (R)-pantoate. 181–184 contributes to the ATP binding site; that stretch reads LSSR.

This sequence belongs to the pantothenate synthetase family. Homodimer.

The protein resides in the cytoplasm. The catalysed reaction is (R)-pantoate + beta-alanine + ATP = (R)-pantothenate + AMP + diphosphate + H(+). The protein operates within cofactor biosynthesis; (R)-pantothenate biosynthesis; (R)-pantothenate from (R)-pantoate and beta-alanine: step 1/1. Catalyzes the condensation of pantoate with beta-alanine in an ATP-dependent reaction via a pantoyl-adenylate intermediate. This is Pantothenate synthetase from Variovorax paradoxus (strain S110).